The sequence spans 310 residues: Membrane protein insertase YidC 2 (310 aa).

The first 23 residues, 1–23 (MKKTLKRILFSSLSLSMLLLLTG), serve as a signal peptide directing secretion. Cys-24 carries the N-palmitoyl cysteine lipid modification. Cys-24 carries the S-diacylglycerol cysteine lipid modification. 5 helical membrane passes run 33-53 (PYGV…TYFA), 58-78 (LGFG…ILPL), 135-155 (FGGI…AIFF), 180-200 (LTVI…QGVP), and 219-239 (VFMS…GGIF). Residues 266-310 (NPPKAYKANNARKDVTNSTKATESNQAIITSKKTNRNAGKQKRRG) form a disordered region. Polar residues predominate over residues 281–297 (TNSTKATESNQAIITSK). The span at 298-310 (KTNRNAGKQKRRG) shows a compositional bias: basic residues.

This sequence belongs to the OXA1/ALB3/YidC family. Type 2 subfamily.

Its subcellular location is the cell membrane. In terms of biological role, required for the insertion and/or proper folding and/or complex formation of integral membrane proteins into the membrane. Involved in integration of membrane proteins that insert both dependently and independently of the Sec translocase complex, as well as at least some lipoproteins. The protein is Membrane protein insertase YidC 2 of Streptococcus agalactiae serotype V (strain ATCC BAA-611 / 2603 V/R).